Here is an 84-residue protein sequence, read N- to C-terminus: MRTVVFFILVSIFLVALKPTGTQAQIVDCWETWSRCTKWSQGGTGTLWKSCNDRCKELGRKRGQCEEKPSRCPLSKKAWTCICY.

Residues 1 to 24 (MRTVVFFILVSIFLVALKPTGTQA) form the signal peptide. Gln25 carries the pyrrolidone carboxylic acid modification. 4 disulfide bridges follow: Cys29/Cys72, Cys36/Cys65, Cys51/Cys81, and Cys55/Cys83.

In terms of tissue distribution, expressed in the endodermal epithelium.

The protein resides in the secreted. It localises to the target cell membrane. Its function is as follows. Cationic antimicrobial peptide potently active against Gram-positive and Gram-negative bacteria including multi-resistant human pathogenic strains. Is not active against the Gram-positive Coccus species, Gram-negative non-fermentation species and against the fungus C.albicans. It leads to aggregation of bacteria as an initial step of its bactericidal mechanism. Aggregated cells are connected via electron-dense contacts and adopt a thorn apple-like morphology. Hydramycin contains a belt of positively charged residues that separate two hydrophobic areas. This structure may explain the observed aggregation of bacteria, since each of these areas can immerse into the outer leaflets of the membranes of two individual bacteria. Is able to permeabilize membranes of viable bacteria at low and neutral pH values, but no pore-forming activity is not detected. The protein is Hydramacin-1 of Hydra vulgaris (Hydra).